Here is a 213-residue protein sequence, read N- to C-terminus: Thymidylate kinase (213 aa).

10–17 (GLEGAGKT) provides a ligand contact to ATP.

Belongs to the thymidylate kinase family.

The enzyme catalyses dTMP + ATP = dTDP + ADP. Its function is as follows. Phosphorylation of dTMP to form dTDP in both de novo and salvage pathways of dTTP synthesis. The sequence is that of Thymidylate kinase from Shigella boydii serotype 18 (strain CDC 3083-94 / BS512).